Consider the following 316-residue polypeptide: MSFSAKVKGEICRYIDISKEEALAQISAIMKVCGTLAFSGRQISFKMTTENPASARLMFTILKDYFDIHAKLMVKKSNSLKKNNIYMVVVTEEMGVKKLLEVTGILREIDGIMSLDYHIDENLVDTEEKKKAYIRGAFIGGGSISNPEKTYHLEFVTHSQEYAEDLGKLINTFGLKAKVIQRKNSYIVYIKEGEQIVDLLNIIGAHTALLELENIRIMKEMRNNVNRLVNCETANLSKTVNAAVRQVESIKLIEREIGLARLPKNLREVAELRLTYPEESLKELGEMLEPPVGKSGVNHRLRKIEKIAEELRTGNF.

A DNA-binding region (H-T-H motif) is located at residues 280–313; the sequence is SLKELGEMLEPPVGKSGVNHRLRKIEKIAEELRT.

The protein belongs to the WhiA family.

Its function is as follows. Involved in cell division and chromosome segregation. The chain is Probable cell division protein WhiA from Clostridium perfringens (strain 13 / Type A).